A 146-amino-acid polypeptide reads, in one-letter code: Catabolic 3-dehydroquinase (146 aa).

The active-site Proton acceptor is the Y24. Residues N78, H84, and D91 each contribute to the substrate site. H104 (proton donor) is an active-site residue. Residues 105-106 (IT) and R115 contribute to the substrate site.

It belongs to the type-II 3-dehydroquinase family. In terms of assembly, homododecamer. Adopts a ring-like structure, composed of an arrangement of two hexameric rings stacked on top of one another.

The enzyme catalyses 3-dehydroquinate = 3-dehydroshikimate + H2O. The protein operates within aromatic compound metabolism; 3,4-dihydroxybenzoate biosynthesis; 3,4-dihydroxybenzoate from 3-dehydroquinate: step 1/2. Its function is as follows. Is involved in the catabolism of quinate. Allows the utilization of quinate as carbon source via the beta-ketoadipate pathway. The protein is Catabolic 3-dehydroquinase of Meyerozyma guilliermondii (strain ATCC 6260 / CBS 566 / DSM 6381 / JCM 1539 / NBRC 10279 / NRRL Y-324) (Yeast).